Consider the following 341-residue polypeptide: Methionine import ATP-binding protein MetN 3 (341 aa).

The region spanning 2–241 (ILLENVKKIY…PQQDITKRFV (240 aa)) is the ABC transporter domain. 38-45 (GYSGAGKS) serves as a coordination point for ATP.

This sequence belongs to the ABC transporter superfamily. Methionine importer (TC 3.A.1.24) family. The complex is composed of two ATP-binding proteins (MetN), two transmembrane proteins (MetI) and a solute-binding protein (MetQ).

It localises to the cell membrane. It catalyses the reaction L-methionine(out) + ATP + H2O = L-methionine(in) + ADP + phosphate + H(+). It carries out the reaction D-methionine(out) + ATP + H2O = D-methionine(in) + ADP + phosphate + H(+). Its function is as follows. Part of the ABC transporter complex MetNIQ involved in methionine import. Responsible for energy coupling to the transport system. This Bacillus anthracis protein is Methionine import ATP-binding protein MetN 3.